A 67-amino-acid polypeptide reads, in one-letter code: Small ribosomal subunit protein eS31 (67 aa).

Residues C31, C34, C49, and C52 each coordinate Zn(2+). A C4-type zinc finger spans residues 31–52; the sequence is CPKCGAGVFMAEHLNRFACGKC.

Belongs to the eukaryotic ribosomal protein eS31 family. In terms of assembly, part of the 30S ribosomal subunit. The cofactor is Zn(2+).

The protein is Small ribosomal subunit protein eS31 of Methanococcus maripaludis (strain DSM 14266 / JCM 13030 / NBRC 101832 / S2 / LL).